The sequence spans 860 residues: Leucine--tRNA ligase (860 aa).

Positions 42-52 (PYPSGRLHMGH) match the 'HIGH' region motif. Positions 619-623 (KMSKS) match the 'KMSKS' region motif. ATP is bound at residue K622.

This sequence belongs to the class-I aminoacyl-tRNA synthetase family.

It is found in the cytoplasm. It catalyses the reaction tRNA(Leu) + L-leucine + ATP = L-leucyl-tRNA(Leu) + AMP + diphosphate. The protein is Leucine--tRNA ligase of Salmonella paratyphi A (strain ATCC 9150 / SARB42).